We begin with the raw amino-acid sequence, 269 residues long: Phosphonates import ATP-binding protein PhnC (269 aa).

In terms of domain architecture, ABC transporter spans 8-251 (IHLYGASLRH…LLDALYANEQ (244 aa)). 40-47 (GPSGAGKS) lines the ATP pocket.

This sequence belongs to the ABC transporter superfamily. Phosphonates importer (TC 3.A.1.9.1) family. The complex is composed of two ATP-binding proteins (PhnC), two transmembrane proteins (PhnE) and a solute-binding protein (PhnD).

It localises to the cell inner membrane. The catalysed reaction is phosphonate(out) + ATP + H2O = phosphonate(in) + ADP + phosphate + H(+). In terms of biological role, part of the ABC transporter complex PhnCDE involved in phosphonates import. Responsible for energy coupling to the transport system. The polypeptide is Phosphonates import ATP-binding protein PhnC (Pseudomonas putida (strain ATCC 47054 / DSM 6125 / CFBP 8728 / NCIMB 11950 / KT2440)).